Reading from the N-terminus, the 142-residue chain is NCT transcriptional regulatory complex subunit B (142 aa).

This sequence belongs to the NC2 beta/DR1 family. Forms the NCT transcriptional regulatory complex with nctA and mot1.

Its subcellular location is the nucleus. Part of the NCT transcriptional regulatory complex that acts as a key regulator of ergosterol biosynthesis and the azole exporter cdr1B. The NCT complex binds the promoters of genes linked to azole susceptibility, and especially represses the expression of cdr1B transporter. The protein is NCT transcriptional regulatory complex subunit B of Aspergillus fumigatus (strain CBS 144.89 / FGSC A1163 / CEA10) (Neosartorya fumigata).